We begin with the raw amino-acid sequence, 493 residues long: Probable cytosol aminopeptidase (493 aa).

Positions 257 and 262 each coordinate Mn(2+). K269 is an active-site residue. Mn(2+)-binding residues include D280, D339, and E341. Residue R343 is part of the active site.

Belongs to the peptidase M17 family. Mn(2+) is required as a cofactor.

It is found in the cytoplasm. The enzyme catalyses Release of an N-terminal amino acid, Xaa-|-Yaa-, in which Xaa is preferably Leu, but may be other amino acids including Pro although not Arg or Lys, and Yaa may be Pro. Amino acid amides and methyl esters are also readily hydrolyzed, but rates on arylamides are exceedingly low.. It catalyses the reaction Release of an N-terminal amino acid, preferentially leucine, but not glutamic or aspartic acids.. Functionally, presumably involved in the processing and regular turnover of intracellular proteins. Catalyzes the removal of unsubstituted N-terminal amino acids from various peptides. The polypeptide is Probable cytosol aminopeptidase (pepA) (Aquifex aeolicus (strain VF5)).